The sequence spans 77 residues: Integrin beta-2 (77 aa).

Cys-36 and Cys-43 form a disulfide bridge. Asn-54 carries an N-linked (GlcNAc...) asparagine glycan.

This sequence belongs to the integrin beta chain family. Dimer of an alpha and beta subunit.

It localises to the membrane. Integrins are a large family of cell surface glycoproteins that mediate cell to cell and cell to matrix adhesion. The chain is Integrin beta-2 (itgb2) from Xenopus laevis (African clawed frog).